Reading from the N-terminus, the 261-residue chain is tRNA pseudouridine synthase A (261 aa).

The active-site Nucleophile is D51. Position 109 (Y109) interacts with substrate.

Belongs to the tRNA pseudouridine synthase TruA family. In terms of assembly, homodimer.

It carries out the reaction uridine(38/39/40) in tRNA = pseudouridine(38/39/40) in tRNA. In terms of biological role, formation of pseudouridine at positions 38, 39 and 40 in the anticodon stem and loop of transfer RNAs. The chain is tRNA pseudouridine synthase A from Shewanella sp. (strain ANA-3).